A 1095-amino-acid polypeptide reads, in one-letter code: 1-phosphatidylinositol 4,5-bisphosphate phosphodiesterase (1095 aa).

The region spanning 319–469 is the PI-PLC X-box domain; the sequence is MEMDQPLAHY…LKRKILIKNK (151 aa). Catalysis depends on residues His334 and His381. Substrate-binding residues include Lys467 and Lys469. The disordered stretch occupies residues 487–529; the sequence is ELKTDDDPEEDASAGKPPEAAAAPAPAPEAAAAAEGAAEGGGG. Over residues 500–523 the composition is skewed to low complexity; that stretch reads AGKPPEAAAAPAPAPEAAAAAEGA. Residues 550 to 666 form the PI-PLC Y-box domain; sequence LSSMVNYAQP…GYLLKPDFMR (117 aa). Substrate-binding residues include Ser579 and Arg606. Residues 666-794 form the C2 domain; sequence RRADKDFDPF…SLRTEANFPM (129 aa). Disordered regions lie at residues 842 to 863 and 1000 to 1030; these read IEEQSGGAARDAGKAKEEEKKE and QAKMSADTAKEVQNDKTLKTKNEKDRRLREK. 2 stretches are compositionally biased toward basic and acidic residues: residues 852–863 and 1007–1030; these read DAGKAKEEEKKE and TAKEVQNDKTLKTKNEKDRRLREK.

Interacts with inaD. In terms of tissue distribution, abundantly expressed in the adult retina.

The enzyme catalyses a 1,2-diacyl-sn-glycero-3-phospho-(1D-myo-inositol-4,5-bisphosphate) + H2O = 1D-myo-inositol 1,4,5-trisphosphate + a 1,2-diacyl-sn-glycerol + H(+). Functionally, the production of the second messenger molecules diacylglycerol (DAG) and inositol 1,4,5-trisphosphate (IP3) is mediated by activated phosphatidylinositol-specific phospholipase C enzymes. Essential component of the phototransduction pathway. Essential downstream component of a hh-signaling pathway which regulates the Duox-dependent gut immune response to bacterial uracil; required for the activation of Cad99C and consequently Cad99C-dependent endosome formation, which is essential for the Duox-dependent production of reactive oxygen species (ROS) in response to intestinal bacterial infection. This Drosophila melanogaster (Fruit fly) protein is 1-phosphatidylinositol 4,5-bisphosphate phosphodiesterase.